We begin with the raw amino-acid sequence, 1087 residues long: Collagen alpha-2(I) chain (1087 aa).

Positions 1–931 (APDPGPGPMG…PGPAGGGYDV (931 aa)) are disordered. Composition is skewed to low complexity over residues 83 to 120 (EPGA…AAGP), 150 to 159 (EPGPNGAVGP), and 166 to 187 (PGNN…AGAP). Residues 189–199 (FPGPRGGPGPQ) are compositionally biased toward pro residues. Low complexity predominate over residues 201 to 211 (PQGAAGQRGLA). The segment covering 218–227 (GVKGDGGPKG) has biased composition (gly residues). Composition is skewed to low complexity over residues 228–241 (EPGN…PGPQ), 278–321 (AAGP…AGPS), 335–345 (PRGQPGNLGFP), 360–384 (KGAT…TGAT), and 396–408 (QGAA…QGLP). Gly residues predominate over residues 409–418 (GPAGGAGEAG). The span at 443-453 (NPGAAGASGPQ) shows a compositional bias: low complexity. Residues 466–493 (GTDGGKGEPGAAGAAGGPGHQGPGGMPG) show a composition bias toward gly residues. The segment covering 504–515 (KGEKGEAGHRGP) has biased composition (basic and acidic residues). Composition is skewed to low complexity over residues 560–602 (PAGA…TGAR), 613–640 (FPGA…PAGK), and 677–695 (PGPA…LGLQ). Residues 708–717 (GSPGGAGAVG) show a composition bias toward gly residues. Low complexity-rich tracts occupy residues 718–740 (EPGR…LGLP) and 776–788 (PGSS…AGAP). The segment covering 792 to 812 (GPSGGAGRGNRGESGPGGAAG) has biased composition (gly residues). The segment covering 813 to 828 (AVGPAGARGAAGPSGP) has biased composition (low complexity). Basic and acidic residues predominate over residues 829-843 (RGEKGVAGEKGERGL). Low complexity-rich tracts occupy residues 849–868 (LQGM…AGPN) and 897–909 (APGA…YVGP). Positions 910 to 924 (AGPPGSPGLPGPPGP) are enriched in pro residues. A Fibrillar collagen NC1 domain is found at 929 to 1087 (YDVSGYDEYR…GLDLGPVCFK (159 aa)).

The protein belongs to the fibrillar collagen family.

It localises to the secreted. The protein resides in the extracellular space. The protein localises to the extracellular matrix. The sequence is that of Collagen alpha-2(I) chain from Epinephelus costae (Goldblotch grouper).